Reading from the N-terminus, the 358-residue chain is S-adenosylmethionine:tRNA ribosyltransferase-isomerase (358 aa).

Belongs to the QueA family. In terms of assembly, monomer.

Its subcellular location is the cytoplasm. It catalyses the reaction 7-aminomethyl-7-carbaguanosine(34) in tRNA + S-adenosyl-L-methionine = epoxyqueuosine(34) in tRNA + adenine + L-methionine + 2 H(+). The protein operates within tRNA modification; tRNA-queuosine biosynthesis. Its function is as follows. Transfers and isomerizes the ribose moiety from AdoMet to the 7-aminomethyl group of 7-deazaguanine (preQ1-tRNA) to give epoxyqueuosine (oQ-tRNA). This chain is S-adenosylmethionine:tRNA ribosyltransferase-isomerase, found in Chelativorans sp. (strain BNC1).